The chain runs to 157 residues: Putative electron transport protein YsaA (157 aa).

4 4Fe-4S ferredoxin-type domains span residues 2-32 (NRFI…NQDC), 48-80 (KDHC…REHG), 80-109 (GHIF…VVSS), and 112-144 (KARA…CMDV). Residues Cys12, Cys15, Cys18, Cys22, Cys58, Cys61, Cys66, Cys70, Cys89, Cys92, Cys95, Cys99, Cys118, Cys121, Cys130, and Cys134 each contribute to the [4Fe-4S] cluster site.

This chain is Putative electron transport protein YsaA (ysaA), found in Escherichia coli (strain K12).